Consider the following 134-residue polypeptide: DNA-directed RNA polymerase subunit omega (134 aa).

The protein belongs to the RNA polymerase subunit omega family. In terms of assembly, the RNAP catalytic core consists of 2 alpha, 1 beta, 1 beta' and 1 omega subunit. When a sigma factor is associated with the core the holoenzyme is formed, which can initiate transcription.

The enzyme catalyses RNA(n) + a ribonucleoside 5'-triphosphate = RNA(n+1) + diphosphate. In terms of biological role, promotes RNA polymerase assembly. Latches the N- and C-terminal regions of the beta' subunit thereby facilitating its interaction with the beta and alpha subunits. The chain is DNA-directed RNA polymerase subunit omega from Brucella anthropi (strain ATCC 49188 / DSM 6882 / CCUG 24695 / JCM 21032 / LMG 3331 / NBRC 15819 / NCTC 12168 / Alc 37) (Ochrobactrum anthropi).